The following is a 957-amino-acid chain: Glycine dehydrogenase (decarboxylating) (957 aa).

Lysine 708 carries the N6-(pyridoxal phosphate)lysine modification.

This sequence belongs to the GcvP family. The glycine cleavage system is composed of four proteins: P, T, L and H. Pyridoxal 5'-phosphate serves as cofactor.

It carries out the reaction N(6)-[(R)-lipoyl]-L-lysyl-[glycine-cleavage complex H protein] + glycine + H(+) = N(6)-[(R)-S(8)-aminomethyldihydrolipoyl]-L-lysyl-[glycine-cleavage complex H protein] + CO2. In terms of biological role, the glycine cleavage system catalyzes the degradation of glycine. The P protein binds the alpha-amino group of glycine through its pyridoxal phosphate cofactor; CO(2) is released and the remaining methylamine moiety is then transferred to the lipoamide cofactor of the H protein. This chain is Glycine dehydrogenase (decarboxylating), found in Salmonella typhimurium (strain LT2 / SGSC1412 / ATCC 700720).